The primary structure comprises 1249 residues: Hyphally regulated cell wall protein 3 (1249 aa).

The first 20 residues, 1-20 (MHLFKRIALTLWLIISSTLA), serve as a signal peptide directing secretion. A glycan (N-linked (GlcNAc...) asparagine) is linked at N373. A compositionally biased stretch (low complexity) spans 383 to 415 (FPTTSQSSSSETVASSSQPDSSSTEPSAFPSST). Disordered regions lie at residues 383-729 (FPTT…SGII) and 883-1217 (GLST…SSAS). A compositionally biased stretch (polar residues) spans 416–428 (GDSSAEPSITSDY). A compositionally biased stretch (low complexity) spans 429-716 (SSSELSVVPS…SEYTATWTTT (288 aa)). N-linked (GlcNAc...) asparagine glycosylation occurs at N681. Composition is skewed to polar residues over residues 717 to 729 (NSDG…SGII) and 883 to 935 (GLST…PVPT). Residues N891, N940, N944, N948, N952, N956, N960, N966, N970, N974, N984, N988, N992, N996, N1000, N1010, N1014, N1018, N1022, N1026, N1032, N1046, N1050, N1058, N1062, N1072, N1076, N1080, N1086, N1090, N1094, N1098, N1114, N1118, N1122, N1128, N1132, N1136, N1140, N1150, N1154, N1158, N1172, N1180, and N1186 are each glycosylated (N-linked (GlcNAc...) asparagine). Positions 941 to 959 (GSNNGSDNGSNNGSNNGSN) are enriched in low complexity. Gly residues predominate over residues 960–982 (NGSGSGNGSNNGSNNGSGSGNGF). The segment covering 983–1043 (NNGSDNGSNN…SNSGSDSGNG (61 aa)) has biased composition (low complexity). Positions 1062-1078 (NGSGSGGESNNGSGNGS) are enriched in gly residues. A compositionally biased stretch (low complexity) spans 1079–1097 (DNGSSPDNGSNNGSNNGSN). Low complexity predominate over residues 1139 to 1167 (NNGSNSGSNSDNGSNNSSGNGSSSDLGSV). 2 stretches are compositionally biased toward low complexity: residues 1175 to 1194 (NEGS…GAGA) and 1205 to 1217 (SPSA…SSAS). Residue N1225 is glycosylated (N-linked (GlcNAc...) asparagine). A lipid anchor (GPI-anchor amidated asparagine) is attached at N1225. A propeptide spans 1226–1249 (GSGKLLNGKVLTLSVLSSMVVVFL) (removed in mature form).

The protein belongs to the HYR1/IFF family. In terms of processing, the GPI-anchor is attached to the protein in the endoplasmic reticulum and serves to target the protein to the cell surface. There, the glucosamine-inositol phospholipid moiety is cleaved off and the GPI-modified mannoprotein is covalently attached via its lipidless GPI glycan remnant to the 1,6-beta-glucan of the outer cell wall layer.

The protein resides in the secreted. The protein localises to the cell wall. It is found in the membrane. Its function is as follows. GPI-anchored cell wall protein involved in cell wall organization, hyphal growth, as well as in host-fungal interaction and virulence. This Candida albicans (strain SC5314 / ATCC MYA-2876) (Yeast) protein is Hyphally regulated cell wall protein 3 (HYR3).